We begin with the raw amino-acid sequence, 263 residues long: Tryptophan 2,3-dioxygenase (263 aa).

Substrate-binding positions include 32–36 (FIVIH), Y94, and R98. H221 contributes to the heme binding site. T235 contacts substrate.

Belongs to the tryptophan 2,3-dioxygenase family. As to quaternary structure, homotetramer. Heme serves as cofactor.

It carries out the reaction L-tryptophan + O2 = N-formyl-L-kynurenine. Its pathway is amino-acid degradation; L-tryptophan degradation via kynurenine pathway; L-kynurenine from L-tryptophan: step 1/2. Functionally, heme-dependent dioxygenase that catalyzes the oxidative cleavage of the L-tryptophan (L-Trp) pyrrole ring and converts L-tryptophan to N-formyl-L-kynurenine. Catalyzes the oxidative cleavage of the indole moiety. The chain is Tryptophan 2,3-dioxygenase from Caulobacter vibrioides (strain ATCC 19089 / CIP 103742 / CB 15) (Caulobacter crescentus).